The primary structure comprises 953 residues: Serine/threonine-protein kinase ppk30 (953 aa).

Residues 57-326 (VIIQRYLSEG…IYQTLKEIME (270 aa)) enclose the Protein kinase domain. ATP is bound by residues 63–71 (LSEGGFSHV) and Lys-85. The active-site Proton acceptor is the Asp-187. Disordered regions lie at residues 343-402 (ASTY…PSVS), 427-451 (SPIP…RRAD), 538-606 (RFLP…NRMN), 641-669 (RKEP…NKDV), 748-791 (STSQ…RPIG), and 864-953 (RKSC…ESLE). Composition is skewed to polar residues over residues 355–369 (RTPS…SRPA), 378–402 (TVQT…PSVS), and 433–444 (KSYSATIQTPRS). Residues 547-557 (PSEFSSSVGSK) are compositionally biased toward low complexity. Polar residues predominate over residues 558–575 (QNLSMDIPSVQNVSTKQK). The span at 656 to 669 (LKKDQSSEVANKDV) shows a compositional bias: basic and acidic residues. The span at 748–766 (STSQVSHTQRLQQSISTSL) shows a compositional bias: polar residues. 3 stretches are compositionally biased toward basic and acidic residues: residues 767–778 (ERVKSNTKKESN), 865–884 (KSCE…DLER), and 937–953 (PHIE…ESLE). 2 positions are modified to phosphoserine: Ser-872 and Ser-875.

Belongs to the protein kinase superfamily. Ser/Thr protein kinase family.

The protein resides in the cytoplasm. It catalyses the reaction L-seryl-[protein] + ATP = O-phospho-L-seryl-[protein] + ADP + H(+). It carries out the reaction L-threonyl-[protein] + ATP = O-phospho-L-threonyl-[protein] + ADP + H(+). This Schizosaccharomyces pombe (strain 972 / ATCC 24843) (Fission yeast) protein is Serine/threonine-protein kinase ppk30 (ppk30).